An 83-amino-acid polypeptide reads, in one-letter code: Toxin BmKBT (83 aa).

Positions 1 to 19 are cleaved as a signal peptide; that stretch reads MKAALLLVIFSLMLIGVLT. The 61-residue stretch at 21-81 folds into the LCN-type CS-alpha/beta domain; that stretch reads KSGYPTDHEG…TWSRATNKCR (61 aa). 4 disulfide bridges follow: Cys-31–Cys-80, Cys-35–Cys-54, Cys-41–Cys-61, and Cys-45–Cys-63. A propeptide (removed by a carboxypeptidase) is located at residue Lys-83.

It belongs to the long (4 C-C) scorpion toxin superfamily. Sodium channel inhibitor family. Beta subfamily. As to expression, expressed by the venom gland.

It is found in the secreted. Its function is as follows. This toxin increases the peak sodium current, slows down the inactivation of sodium channels (Nav), and prolongs the action potential of dorsal root ganglion neurons, which indicates that it behaves as a classical alpha-toxin. It binds to mammal brain and insect sodium channels, but with a different manner. This peptide may bind to a distinct receptor site on mammal brain sodium channels, which is unconnected with that for BmKAS (a beta-toxin), BmKIT2 (a beta-toxin) or BmK I (an alpha toxin). In contrast, the receptor site for BmKabT on insect sodium channels might be closely related to that for the beta-insect depressant toxin BmKIT2. Possesses potent toxicity in mice but induces only paralysis in cotton bollworm. The sequence is that of Toxin BmKBT from Olivierus martensii (Manchurian scorpion).